We begin with the raw amino-acid sequence, 407 residues long: Type II secretion system protein L (407 aa).

Topologically, residues 1–257 are cytoplasmic; that stretch reads MEGSVSEFLT…WLRYWQIWRK (257 aa). The helical transmembrane segment at 258–275 threads the bilayer; sequence VAIAAGLFVAVSISYSLF. The Periplasmic portion of the chain corresponds to 276–407; the sequence is QAHQYEAQAD…VFGVFVVKPK (132 aa).

This sequence belongs to the GSP L family. In terms of assembly, type II secretion system is composed of four main components: the outer membrane complex, the inner membrane complex, the cytoplasmic secretion ATPase and the periplasm-spanning pseudopilus. Forms homodimers. Interacts with EpsM/GspM. Interacts with EpsE/GspE and EpsF/GspF.

The protein resides in the cell inner membrane. Functionally, inner membrane component of the type II secretion system required for the energy-dependent secretion of extracellular factors such as proteases and toxins from the periplasm. Plays a role in the complex assembly and recruits EpsM resulting in a stable complex in the inner membrane. Provides thus a link between the energy-providing EpsE protein in the cytoplasm and the rest of the T2SS machinery. This chain is Type II secretion system protein L (epsL), found in Vibrio cholerae serotype O1 (strain ATCC 39315 / El Tor Inaba N16961).